The chain runs to 90 residues: uncharacterized protein (90 aa).

This is an uncharacterized protein from Haemophilus influenzae (strain ATCC 51907 / DSM 11121 / KW20 / Rd).